Consider the following 287-residue polypeptide: Protease HtpX homolog (287 aa).

Helical transmembrane passes span 4-24 (VGLF…VMSL) and 35-53 (LLLM…SLAL). His-139 contributes to the Zn(2+) binding site. Glu-140 is an active-site residue. His-143 serves as a coordination point for Zn(2+). 2 consecutive transmembrane segments (helical) span residues 147–167 (GDMV…IFLS) and 194–214 (AVSM…VMWF). Glu-219 contacts Zn(2+).

Belongs to the peptidase M48B family. It depends on Zn(2+) as a cofactor.

The protein localises to the cell inner membrane. The sequence is that of Protease HtpX homolog from Desulfotalea psychrophila (strain LSv54 / DSM 12343).